The primary structure comprises 217 residues: Adenylate kinase (217 aa).

10 to 15 (GAGKGT) lines the ATP pocket. The interval 30–59 (STGDLFRANISQQTELGKLAKSYMNAGNLV) is NMP. Residues Thr31, Arg36, 57–59 (NLV), 85–88 (GFPR), and Gln92 contribute to the AMP site. Residues 126-164 (GRRVCRNEPKHVFHVTYTPPKKEGVCDVCGGELYQRDDD) are LID. Residues Arg127 and 137–138 (VF) contribute to the ATP site. The AMP site is built by Arg161 and Arg172. Residue Gly200 participates in ATP binding.

It belongs to the adenylate kinase family. As to quaternary structure, monomer.

The protein localises to the cytoplasm. The enzyme catalyses AMP + ATP = 2 ADP. Its pathway is purine metabolism; AMP biosynthesis via salvage pathway; AMP from ADP: step 1/1. Catalyzes the reversible transfer of the terminal phosphate group between ATP and AMP. Plays an important role in cellular energy homeostasis and in adenine nucleotide metabolism. This chain is Adenylate kinase, found in Streptomyces coelicolor (strain ATCC BAA-471 / A3(2) / M145).